Here is a 201-residue protein sequence, read N- to C-terminus: Peptidyl-tRNA hydrolase (201 aa).

A tRNA-binding site is contributed by Y14. Catalysis depends on H19, which acts as the Proton acceptor. TRNA-binding residues include Y64, N66, and N112.

The protein belongs to the PTH family. As to quaternary structure, monomer.

The protein localises to the cytoplasm. It catalyses the reaction an N-acyl-L-alpha-aminoacyl-tRNA + H2O = an N-acyl-L-amino acid + a tRNA + H(+). In terms of biological role, hydrolyzes ribosome-free peptidyl-tRNAs (with 1 or more amino acids incorporated), which drop off the ribosome during protein synthesis, or as a result of ribosome stalling. Functionally, catalyzes the release of premature peptidyl moieties from peptidyl-tRNA molecules trapped in stalled 50S ribosomal subunits, and thus maintains levels of free tRNAs and 50S ribosomes. This is Peptidyl-tRNA hydrolase from Bradyrhizobium diazoefficiens (strain JCM 10833 / BCRC 13528 / IAM 13628 / NBRC 14792 / USDA 110).